A 195-amino-acid polypeptide reads, in one-letter code: Large ribosomal subunit protein uL18 (195 aa).

It belongs to the universal ribosomal protein uL18 family. As to quaternary structure, part of the 50S ribosomal subunit. Contacts the 5S and 23S rRNAs.

Functionally, this is one of the proteins that bind and probably mediate the attachment of the 5S RNA into the large ribosomal subunit, where it forms part of the central protuberance. The polypeptide is Large ribosomal subunit protein uL18 (Methanococcus vannielii).